The following is a 196-amino-acid chain: UPF0340 protein TTHA0583 (196 aa).

It belongs to the UPF0340 family.

The polypeptide is UPF0340 protein TTHA0583 (Thermus thermophilus (strain ATCC 27634 / DSM 579 / HB8)).